The primary structure comprises 240 residues: Keratinocyte-associated protein 3 (240 aa).

The next 4 membrane-spanning stretches (helical) occupy residues 21-41 (VGLALILVGHVNLLVGAVLHG), 63-83 (VISVGSGLLSVSVGLVALLAS), 95-115 (LLTLALVNLLLSAACSMGLLL), and 163-183 (ALALWIPSLFMSAAEAALSGY).

Belongs to the TMEM54 family.

It is found in the membrane. The sequence is that of Keratinocyte-associated protein 3 (Krtcap3) from Mus musculus (Mouse).